We begin with the raw amino-acid sequence, 260 residues long: Small ribosomal subunit protein uS2 (260 aa).

The protein belongs to the universal ribosomal protein uS2 family.

The polypeptide is Small ribosomal subunit protein uS2 (Streptococcus gordonii (strain Challis / ATCC 35105 / BCRC 15272 / CH1 / DL1 / V288)).